Reading from the N-terminus, the 436-residue chain is RNA-binding motif, single-stranded-interacting protein 3 (436 aa).

The disordered stretch occupies residues 28-56 (APAPHPMAPPSPSTNSSSNNSSNNSSGEQ). The span at 30–39 (APHPMAPPSP) shows a compositional bias: pro residues. Over residues 40-53 (STNSSSNNSSNNSS) the composition is skewed to low complexity. RRM domains are found at residues 60-133 (TNLY…MAKQ) and 139-224 (TNLY…FADG). The segment covering 398 to 421 (TSPQTVAPSSQDTSGQQQQIAVDT) has biased composition (polar residues). Residues 398 to 436 (TSPQTVAPSSQDTSGQQQQIAVDTSNEHAPAYSYQQSKP) are disordered.

It is found in the cytoplasm. Binds poly(A) and poly(U) oligoribonucleotides. This Pongo abelii (Sumatran orangutan) protein is RNA-binding motif, single-stranded-interacting protein 3 (RBMS3).